Here is an 85-residue protein sequence, read N- to C-terminus: uncharacterized protein (85 aa).

This is an uncharacterized protein from Escherichia coli (strain K12).